We begin with the raw amino-acid sequence, 202 residues long: Oxopyrrolidines biosynthesis cluster protein O (202 aa).

Its function is as follows. Part of the gene cluster that mediates the biosynthesis of oxopyrrolidines, polyketide-amino acid hybrid compounds with feature structures of tetramic acid. Does not seem to play a role in oxopyrrolidines A and B biosynthesis. In Penicillium oxalicum (strain 114-2 / CGMCC 5302) (Penicillium decumbens), this protein is Oxopyrrolidines biosynthesis cluster protein O.